The following is a 521-amino-acid chain: GMP synthase [glutamine-hydrolyzing] (521 aa).

The region spanning 5–197 is the Glutamine amidotransferase type-1 domain; sequence KILILDFGSQ…VLDICGAQPG (193 aa). Cys-81 serves as the catalytic Nucleophile. Residues His-171 and Glu-173 contribute to the active site. The GMPS ATP-PPase domain occupies 198-390; sequence WTMPNYIEEA…LGLPREMVYR (193 aa). An ATP-binding site is contributed by 225-231; sequence SGGVDSS.

As to quaternary structure, homodimer.

It catalyses the reaction XMP + L-glutamine + ATP + H2O = GMP + L-glutamate + AMP + diphosphate + 2 H(+). The protein operates within purine metabolism; GMP biosynthesis; GMP from XMP (L-Gln route): step 1/1. Catalyzes the synthesis of GMP from XMP. This chain is GMP synthase [glutamine-hydrolyzing], found in Neisseria gonorrhoeae (strain ATCC 700825 / FA 1090).